The sequence spans 303 residues: Glyceraldehyde-3-phosphate dehydrogenase (303 aa).

Residues 6 to 7, D28, R72, and T114 contribute to the NAD(+) site; that span reads RI. Residues 143–145, T174, 203–204, and R226 each bind D-glyceraldehyde 3-phosphate; these read SCT and TG. C144 (nucleophile) is an active-site residue.

It belongs to the glyceraldehyde-3-phosphate dehydrogenase family. Homotetramer.

Its subcellular location is the cytoplasm. The catalysed reaction is D-glyceraldehyde 3-phosphate + phosphate + NAD(+) = (2R)-3-phospho-glyceroyl phosphate + NADH + H(+). The protein operates within carbohydrate degradation; glycolysis; pyruvate from D-glyceraldehyde 3-phosphate: step 1/5. In terms of biological role, catalyzes the oxidative phosphorylation of glyceraldehyde 3-phosphate (G3P) to 1,3-bisphosphoglycerate (BPG) using the cofactor NAD. The first reaction step involves the formation of a hemiacetal intermediate between G3P and a cysteine residue, and this hemiacetal intermediate is then oxidized to a thioester, with concomitant reduction of NAD to NADH. The reduced NADH is then exchanged with the second NAD, and the thioester is attacked by a nucleophilic inorganic phosphate to produce BPG. This is Glyceraldehyde-3-phosphate dehydrogenase (gap) from Klebsiella pneumoniae.